The following is a 305-amino-acid chain: MNDVSSAPSESLTEYFPEDLLHVVRENQPLRETLWLGIGGPARFLAEPVEIDQIEKLYTAAREKQLALRVLGQGSNVLVREAGFDGLVIKLSAPATSGLEIQGQKLVAGAGAKLTHAVIKTVGEGLGGLEHLVGIPGSIGAAVVGNVSAEGRDIGSVVESIEIIDEEGKRKTLTGDEAGFAHRQSTLMGTVVLSVTFNLEPKDVSALTKRMQKLWIHRGQRRPSESNRIAMPFIDPDSISACELINSTGLAGIREGDVSLDSAAPHYLIAHENATSDQCVKLIGRVREQVLMQTGIDLQLNLQIW.

Residues Gly-37–Lys-202 enclose the FAD-binding PCMH-type domain. Arg-183 is a catalytic residue.

Belongs to the MurB family. FAD serves as cofactor.

The protein localises to the cytoplasm. The catalysed reaction is UDP-N-acetyl-alpha-D-muramate + NADP(+) = UDP-N-acetyl-3-O-(1-carboxyvinyl)-alpha-D-glucosamine + NADPH + H(+). The protein operates within cell wall biogenesis; peptidoglycan biosynthesis. Cell wall formation. The polypeptide is UDP-N-acetylenolpyruvoylglucosamine reductase (Rhodopirellula baltica (strain DSM 10527 / NCIMB 13988 / SH1)).